Reading from the N-terminus, the 673-residue chain is MYVNYIGLFAFVQISLTLAYPPGRVEISEIYDFEESSSYKGQDIDTSVLYTLSKRKPALVKRSTDASYAPFNVTCSNDNLLRPASEGLNEGEQSYINKRISKVNSELRSFISKTGLNVDLDKVVNSSDGPRLGIAFSGGGLRAMVNGGGAFNAFDSRFESDSPLSGLLQSAMYISGLSGGSWLVGSVAINNFTNITYLRDNVWNLEHSVFAPHGDNVIENLNYYNDLRKEIDQKKHAGFDCSLTDLWGRALSRKLVDAERGGPGITYSSMRNQSWFQNADYPYPIIVADSRLEEETAIPANTSIFEFTAYEFGTWDNGIKAFIPMEYVGTHLLDGVPPDKSCIHNYDNAGFVMGTSATLFNSFLLDWNENVKKNDTYYDILHAILEDLSKHQDDIAPYPNPYQNYTTSNTSVVNAFEPYDTIDLVDGGEDRENIPLWPLLHPQRFVDVVFAIDSTYNDPYGWPLGSSIVATYERVVTFNANKSVDVRGFPYIPDENTIISLGLNTRPTFFGCDGKNTTAGNHDVDNNTPPLLVYFPNYPWTYYSNISTFTMSMDDKMANGILENAFMSTTQNNNESFAVCLACAIIQRSLERKKLSTPTQCSSCFQEYCWDGTLATSTASVYDPTVMSAATTSRAPSGTTSGTASSTTSSSVASATPTHKHWWDSIFEAKENP.

The first 19 residues, 1–19 (MYVNYIGLFAFVQISLTLA), serve as a signal peptide directing secretion. 13 N-linked (GlcNAc...) asparagine glycosylation sites follow: Asn-72, Asn-125, Asn-191, Asn-194, Asn-272, Asn-301, Asn-374, Asn-404, Asn-409, Asn-481, Asn-516, Asn-545, and Asn-574. The PLA2c domain maps to 74–615 (TCSNDNLLRP…QEYCWDGTLA (542 aa)). Residues 631–653 (TTSRAPSGTTSGTASSTTSSSVA) are disordered.

This sequence belongs to the lysophospholipase family.

The protein resides in the secreted. It carries out the reaction a 1-acyl-sn-glycero-3-phosphocholine + H2O = sn-glycerol 3-phosphocholine + a fatty acid + H(+). In terms of biological role, catalyzes the release of fatty acids from lysophospholipids. The polypeptide is Probable lysophospholipase 4 (plb4) (Schizosaccharomyces pombe (strain 972 / ATCC 24843) (Fission yeast)).